Reading from the N-terminus, the 230-residue chain is Claudin-2 (230 aa).

The Cytoplasmic segment spans residues 1 to 7; the sequence is MASLGLQ. Residues 8-28 form a helical membrane-spanning segment; the sequence is LVGYVLGLLGLLGTVIAMLLP. The Extracellular segment spans residues 29 to 81; sequence SWRTSSYVGASIVTAVGFSKGLWMECATHSTGITQCDIYSTMLGLPADIQAAQ. A disulfide bridge connects residues C54 and C64. A helical transmembrane segment spans residues 82-102; the sequence is AMMVTSSAMSSLACIVSVVGM. Over 103–116 the chain is Cytoplasmic; it reads RCTVFFQESRAKDR. Residues 117–137 traverse the membrane as a helical segment; that stretch reads VAVVGGVFFILGGLLGFIPVA. The Extracellular portion of the chain corresponds to 138 to 162; it reads WNLHGILRDFYSPLVPDSMKFEIGE. The chain crosses the membrane as a helical span at residues 163–183; that stretch reads ALYLGIISSLFSLIAGIFLCF. Residues 184 to 230 are Cytoplasmic-facing; it reads SCSPQGNRSNYYDAYQAQPLATRSSPRPGQAPKGKSEFNSYSLTGYV. Residues 205–230 form a disordered region; the sequence is TRSSPRPGQAPKGKSEFNSYSLTGYV. Residue K218 forms a Glycyl lysine isopeptide (Lys-Gly) (interchain with G-Cter in SUMO) linkage. Phosphoserine is present on residues S219 and S223. Polar residues predominate over residues 220–230; it reads EFNSYSLTGYV. The interval 229-230 is interaction with TJP1, TJP2 and TJP3; it reads YV.

Belongs to the claudin family. In terms of assembly, can form homo- and heteropolymers with other claudins to mediate paracellular barrier and channel functions of tight junctions in response to physiological stimuli. Homopolymers interact with CLDN3, but not CLDN1, homopolymers. Directly interacts with TJP1/ZO-1, TJP2/ZO-2 and TJP3/ZO-3. In terms of processing, the disulfide bond is necessary for pore formation, but is not required for correct protein trafficking.

It is found in the cell junction. Its subcellular location is the tight junction. It localises to the cell membrane. It catalyses the reaction Na(+)(in) = Na(+)(out). The enzyme catalyses K(+)(in) = K(+)(out). The catalysed reaction is Rb(+)(in) = Rb(+)(out). It carries out the reaction Li(+)(in) = Li(+)(out). It catalyses the reaction Cs(+)(in) = Cs(+)(out). The enzyme catalyses Ca(2+)(in) = Ca(2+)(out). The catalysed reaction is methylamine(out) = methylamine(in). It carries out the reaction choline(out) = choline(in). It catalyses the reaction H2O(in) = H2O(out). Forms paracellular channels: polymerizes in tight junction strands with cation- and water-selective channels through the strands, conveying epithelial permeability in a process known as paracellular tight junction permeability. In intestinal epithelium, allows for sodium and water fluxes from the peritoneal side to the lumen of the intestine to regulate nutrient absorption and clear enteric pathogens as part of mucosal immune response. In kidney, allows passive sodium and calcium reabsorption across proximal tubules from the lumen back to the bloodstream. In the hepatobiliary tract, allows paracellular water and cation fluxes in the hepatic perivenous areas and biliary epithelium to generate bile flow and maintain osmotic gradients. In Bos taurus (Bovine), this protein is Claudin-2 (CLDN2).